We begin with the raw amino-acid sequence, 320 residues long: NAD kinase (320 aa).

Asp96 serves as the catalytic Proton acceptor. NAD(+) contacts are provided by residues 96–97 (DG), Arg101, 170–171 (NE), Asp200, and 211–216 (TAYAFS).

This sequence belongs to the NAD kinase family. A divalent metal cation serves as cofactor.

The protein resides in the cytoplasm. It carries out the reaction NAD(+) + ATP = ADP + NADP(+) + H(+). In terms of biological role, involved in the regulation of the intracellular balance of NAD and NADP, and is a key enzyme in the biosynthesis of NADP. Catalyzes specifically the phosphorylation on 2'-hydroxyl of the adenosine moiety of NAD to yield NADP. The protein is NAD kinase of Rhodococcus jostii (strain RHA1).